We begin with the raw amino-acid sequence, 217 residues long: Imidazole glycerol phosphate synthase subunit HisH (217 aa).

Residues 3–217 form the Glutamine amidotransferase type-1 domain; the sequence is TIAIVDYGMG…IYRNFVHWKP (215 aa). The active-site Nucleophile is the cysteine 82. Catalysis depends on residues histidine 197 and glutamate 199.

As to quaternary structure, heterodimer of HisH and HisF.

It localises to the cytoplasm. It catalyses the reaction 5-[(5-phospho-1-deoxy-D-ribulos-1-ylimino)methylamino]-1-(5-phospho-beta-D-ribosyl)imidazole-4-carboxamide + L-glutamine = D-erythro-1-(imidazol-4-yl)glycerol 3-phosphate + 5-amino-1-(5-phospho-beta-D-ribosyl)imidazole-4-carboxamide + L-glutamate + H(+). The catalysed reaction is L-glutamine + H2O = L-glutamate + NH4(+). The protein operates within amino-acid biosynthesis; L-histidine biosynthesis; L-histidine from 5-phospho-alpha-D-ribose 1-diphosphate: step 5/9. Functionally, IGPS catalyzes the conversion of PRFAR and glutamine to IGP, AICAR and glutamate. The HisH subunit catalyzes the hydrolysis of glutamine to glutamate and ammonia as part of the synthesis of IGP and AICAR. The resulting ammonia molecule is channeled to the active site of HisF. The polypeptide is Imidazole glycerol phosphate synthase subunit HisH (Ralstonia nicotianae (strain ATCC BAA-1114 / GMI1000) (Ralstonia solanacearum)).